Consider the following 89-residue polypeptide: Arminin 375 (89 aa).

The signal sequence occupies residues methionine 1–alanine 18. Positions lysine 19–alanine 57 are excised as a propeptide. Alanine 86 bears the Alanine amide mark.

It belongs to the arminin family. As to expression, expressed in entodermal epithelium along the body column.

The protein localises to the secreted. It is found in the target cell membrane. Antimicrobial peptide with a broad-spectrum antimicrobial activity. Keeps its antibacterial activity under a wide range of salt concentrations that mimic physiological conditions of human blood, which is surprising, since Hydra is an obligate freshwater animal with nearly no salt tolerance. Does not affect red blood cells. The polypeptide is Arminin 375 (Hydra oligactis (Brown hydra)).